The chain runs to 83 residues: Large ribosomal subunit protein bL27 (83 aa).

The interval 1-26 (MAHKKAGGSSKNGRDSRGQRRGVKRF) is disordered.

The protein belongs to the bacterial ribosomal protein bL27 family.

This is Large ribosomal subunit protein bL27 from Desulfosudis oleivorans (strain DSM 6200 / JCM 39069 / Hxd3) (Desulfococcus oleovorans).